Consider the following 348-residue polypeptide: Rhodopsin (348 aa).

Met-1 carries the post-translational modification N-acetylmethionine. Residues 1-36 lie on the Extracellular side of the membrane; it reads MNGTEGPNFYVPFSNATGVVRSPFEYPQYYLAEPWQ. Residues Asn-2 and Asn-15 are each glycosylated (N-linked (GlcNAc...) asparagine). The helical transmembrane segment at 37–61 threads the bilayer; sequence FSMLAAYMFLLIVLGFPINFLTLYV. Residues 62 to 73 are Cytoplasmic-facing; the sequence is TVQHKKLRTPLN. Residues 74-96 traverse the membrane as a helical segment; sequence YILLNLAVADLFMVFGGFTTTLY. Residues 97-110 are Extracellular-facing; it reads TSLHGYFVFGPTGC. A disulfide bond links Cys-110 and Cys-187. A helical membrane pass occupies residues 111–133; that stretch reads NLEGFFATLGGEIALWSLVVLAI. A 'Ionic lock' involved in activated form stabilization motif is present at residues 134–136; the sequence is ERY. Residues 134-152 are Cytoplasmic-facing; it reads ERYVVICKPMSNFRFGENH. The helical transmembrane segment at 153 to 173 threads the bilayer; sequence AIMGVVFTWIMALACAAPPLV. The Extracellular portion of the chain corresponds to 174 to 202; that stretch reads GWSRYIPEGMQCSCGVDYYTLKPEVNNES. Glu-201 serves as a coordination point for Zn(2+). A helical transmembrane segment spans residues 203 to 224; it reads FVIYMFVVHFTIPLIVIFFCYG. Topologically, residues 225–252 are cytoplasmic; the sequence is QLVFTVKEAAAQQQESATTQKAEKEVTR. A helical transmembrane segment spans residues 253–274; that stretch reads MVILMVVFFLICWFPYAGVAFY. Residues 275–286 lie on the Extracellular side of the membrane; the sequence is IFTHQGSNFGPI. Gln-279 lines the Zn(2+) pocket. A helical transmembrane segment spans residues 287–308; the sequence is FMTLPAFFAKSSSIYNPVIYIM. Position 296 is an N6-(retinylidene)lysine (Lys-296). At 309-348 the chain is on the cytoplasmic side; it reads MNKQFRNCMLTTLCCGKNILGDDEASATASKTETSQVAPA. Residues Cys-322 and Cys-323 are each lipidated (S-palmitoyl cysteine). Residues 330–348 are interaction with SAG; it reads DDEASATASKTETSQVAPA. The residue at position 334 (Ser-334) is a Phosphoserine. Thr-336 carries the phosphothreonine modification. The residue at position 338 (Ser-338) is a Phosphoserine. A phosphothreonine mark is found at Thr-340 and Thr-342. Ser-343 carries the phosphoserine modification.

It belongs to the G-protein coupled receptor 1 family. Opsin subfamily. As to quaternary structure, homodimer. May form a complex composed of RHO, GRK1 and RCVRN in a Ca(2+)-dependent manner; RCVRN prevents the interaction between GRK1 and RHO. Interacts with GRK1. Interacts (phosphorylated form) with SAG. Interacts with GNAT1. Interacts with GNAT3. SAG and G-proteins compete for a common binding site. Interacts with PRCD; the interaction promotes PRCD stability. Forms a complex with ASAP1 and ARF4. Forms a complex with ASAP1, RAB11A, Rabin8/RAB3IP, ARF4 and RAB11FIP3; the complex regulates Golgi-to-cilia rhodopsin/RHO transport in photoreceptors. Post-translationally, phosphorylated on some or all of the serine and threonine residues present in the C-terminal region. In terms of processing, contains one covalently linked retinal chromophore. Upon light absorption, the covalently bound 11-cis-retinal is converted to all-trans-retinal. After hydrolysis of the Schiff base and release of the covalently bound all-trans-retinal, active rhodopsin is regenerated by binding of a fresh molecule of 11-cis-retinal.

It is found in the membrane. Its subcellular location is the cell projection. The protein localises to the cilium. The protein resides in the photoreceptor outer segment. Photoreceptor required for image-forming vision at low light intensity. Required for photoreceptor cell viability after birth. Light-induced isomerization of 11-cis to all-trans retinal triggers a conformational change that activates signaling via G-proteins. Subsequent receptor phosphorylation mediates displacement of the bound G-protein alpha subunit by the arrestin SAG and terminates signaling. The polypeptide is Rhodopsin (RHO) (Cricetulus griseus (Chinese hamster)).